The primary structure comprises 482 residues: ATP synthase subunit beta, chloroplastic (482 aa).

ATP is bound at residue 168–175; the sequence is GGAGVGKT.

It belongs to the ATPase alpha/beta chains family. As to quaternary structure, F-type ATPases have 2 components, CF(1) - the catalytic core - and CF(0) - the membrane proton channel. CF(1) has five subunits: alpha(3), beta(3), gamma(1), delta(1), epsilon(1). CF(0) has four main subunits: a(1), b(1), b'(1) and c(9-12).

The protein localises to the plastid. Its subcellular location is the chloroplast thylakoid membrane. It carries out the reaction ATP + H2O + 4 H(+)(in) = ADP + phosphate + 5 H(+)(out). Produces ATP from ADP in the presence of a proton gradient across the membrane. The catalytic sites are hosted primarily by the beta subunits. The protein is ATP synthase subunit beta, chloroplastic of Gnetum parvifolium (Small-leaved jointfir).